The primary structure comprises 127 residues: Protein chibby homolog 1 (127 aa).

The disordered stretch occupies residues 1–25 (MPLFGSIFSPKKTPPRKSASLSNLH). Phosphoserine occurs at positions 9 and 20. The segment at 60-112 (VADSVISGGVDRRETQRLRKRNQQLEEENNLLRLKVDILLDMLSETTAESHLK) is minimal region for the interaction with PKD2. A coiled-coil region spans residues 68–110 (GVDRRETQRLRKRNQQLEEENNLLRLKVDILLDMLSETTAESH). The tract at residues 77 to 98 (LRKRNQQLEEENNLLRLKVDIL) is leucine-zipper; mediates homodimerization.

It belongs to the chibby family. Homodimer. Homodimerization is essential for nuclear localization and interaction with KPNA4 but is dispensable for interaction with CTNNB1. Interacts with polycystin-2/PKD2 and GM130. Interacts with the C-terminal region of CTNNB1. Interacts (C-terminus) with TCIM (C-terminus), TCIM competes with CTNNB1 for the interaction with CBY1. Interacts with FAM92A; this interaction facilitates targeting of FAM92A to cilium basal body. Interacts with CIBAR2. Interacts with KPNA4. Found in heart, brain, lung, liver, muscle, kidney and testis. Levels are approximately 3-fold higher in embryonic and adult heart than in lung or liver.

It localises to the nucleus speckle. It is found in the cytoplasm. The protein resides in the cytoskeleton. Its subcellular location is the cilium basal body. The protein localises to the microtubule organizing center. It localises to the centrosome. It is found in the centriole. The protein resides in the golgi apparatus. Its subcellular location is the trans-Golgi network. The protein localises to the cell projection. It localises to the cilium. It is found in the flagellum. The protein resides in the nucleus. In terms of biological role, inhibits the Wnt/Wingless pathway by binding to CTNNB1/beta-catenin and inhibiting beta-catenin-mediated transcriptional activation through competition with TCF/LEF transcription factors. Has also been shown to play a role in regulating the intracellular trafficking of polycystin-2/PKD2 and possibly of other intracellular proteins. Promotes adipocyte and cardiomyocyte differentiation. This is Protein chibby homolog 1 (Cby1) from Mus musculus (Mouse).